Here is a 130-residue protein sequence, read N- to C-terminus: Ribosome-binding factor A (130 aa).

It belongs to the RbfA family. In terms of assembly, monomer. Binds 30S ribosomal subunits, but not 50S ribosomal subunits or 70S ribosomes.

It localises to the cytoplasm. One of several proteins that assist in the late maturation steps of the functional core of the 30S ribosomal subunit. Associates with free 30S ribosomal subunits (but not with 30S subunits that are part of 70S ribosomes or polysomes). Required for efficient processing of 16S rRNA. May interact with the 5'-terminal helix region of 16S rRNA. The polypeptide is Ribosome-binding factor A (Prochlorococcus marinus (strain AS9601)).